A 188-amino-acid chain; its full sequence is Elongation factor P (188 aa).

The protein belongs to the elongation factor P family.

The protein localises to the cytoplasm. The protein operates within protein biosynthesis; polypeptide chain elongation. Functionally, involved in peptide bond synthesis. Stimulates efficient translation and peptide-bond synthesis on native or reconstituted 70S ribosomes in vitro. Probably functions indirectly by altering the affinity of the ribosome for aminoacyl-tRNA, thus increasing their reactivity as acceptors for peptidyl transferase. The polypeptide is Elongation factor P (Bdellovibrio bacteriovorus (strain ATCC 15356 / DSM 50701 / NCIMB 9529 / HD100)).